The following is a 148-amino-acid chain: MTIADNKKAFFDYFVEERYEAGIALEGWEVKAIRAGRVQIKEGYVVIRDAELFLIGAHISPLQSASTHVKPDPTRTRKLLLHAEEIKKLIGKVEQRGYTLVPLNLHYARGRVKCEIGLAKGKKLYDKRETEKDRDWQREKARLMREKA.

The segment at 129 to 148 is disordered; the sequence is ETEKDRDWQREKARLMREKA.

Belongs to the SmpB family.

It localises to the cytoplasm. In terms of biological role, required for rescue of stalled ribosomes mediated by trans-translation. Binds to transfer-messenger RNA (tmRNA), required for stable association of tmRNA with ribosomes. tmRNA and SmpB together mimic tRNA shape, replacing the anticodon stem-loop with SmpB. tmRNA is encoded by the ssrA gene; the 2 termini fold to resemble tRNA(Ala) and it encodes a 'tag peptide', a short internal open reading frame. During trans-translation Ala-aminoacylated tmRNA acts like a tRNA, entering the A-site of stalled ribosomes, displacing the stalled mRNA. The ribosome then switches to translate the ORF on the tmRNA; the nascent peptide is terminated with the 'tag peptide' encoded by the tmRNA and targeted for degradation. The ribosome is freed to recommence translation, which seems to be the essential function of trans-translation. This Ralstonia nicotianae (strain ATCC BAA-1114 / GMI1000) (Ralstonia solanacearum) protein is SsrA-binding protein.